The primary structure comprises 203 residues: Dephospho-CoA kinase (203 aa).

The DPCK domain maps to 5–203 (IVGLTGGIAS…VVYRVAASEH (199 aa)). Residue 13 to 18 (ASGKSA) coordinates ATP.

Belongs to the CoaE family.

It is found in the cytoplasm. It carries out the reaction 3'-dephospho-CoA + ATP = ADP + CoA + H(+). It functions in the pathway cofactor biosynthesis; coenzyme A biosynthesis; CoA from (R)-pantothenate: step 5/5. Catalyzes the phosphorylation of the 3'-hydroxyl group of dephosphocoenzyme A to form coenzyme A. The protein is Dephospho-CoA kinase of Xanthomonas euvesicatoria pv. vesicatoria (strain 85-10) (Xanthomonas campestris pv. vesicatoria).